The following is a 240-amino-acid chain: Orotidine 5'-phosphate decarboxylase (240 aa).

Substrate contacts are provided by residues Asp10, Lys32, 59–68 (DLKLHDIPNT), Thr122, Arg183, Gln192, Gly212, and Arg213. Lys61 (proton donor) is an active-site residue.

It belongs to the OMP decarboxylase family. Type 1 subfamily. In terms of assembly, homodimer.

It catalyses the reaction orotidine 5'-phosphate + H(+) = UMP + CO2. The protein operates within pyrimidine metabolism; UMP biosynthesis via de novo pathway; UMP from orotate: step 2/2. Functionally, catalyzes the decarboxylation of orotidine 5'-monophosphate (OMP) to uridine 5'-monophosphate (UMP). This chain is Orotidine 5'-phosphate decarboxylase, found in Carboxydothermus hydrogenoformans (strain ATCC BAA-161 / DSM 6008 / Z-2901).